The following is a 218-amino-acid chain: Probable 3-keto-L-gulonate-6-phosphate decarboxylase (218 aa).

Residue D11 participates in substrate binding. Residues E33 and D62 each coordinate Mg(2+). R194 is a binding site for substrate.

This sequence belongs to the HPS/KGPDC family. KGPDC subfamily. Mg(2+) serves as cofactor.

It catalyses the reaction 3-dehydro-L-gulonate 6-phosphate + H(+) = L-xylulose 5-phosphate + CO2. The protein operates within cofactor degradation; L-ascorbate degradation; D-xylulose 5-phosphate from L-ascorbate: step 2/4. Functionally, catalyzes the decarboxylation of 3-keto-L-gulonate-6-P into L-xylulose-5-P. Is involved in the anaerobic L-ascorbate utilization. In Mycoplasma pneumoniae (strain ATCC 29342 / M129 / Subtype 1) (Mycoplasmoides pneumoniae), this protein is Probable 3-keto-L-gulonate-6-phosphate decarboxylase (ulaD).